The following is a 176-amino-acid chain: MSGRINVVQGDITRIDTDVIVNAANPSLMGGGGVDGAIHRAAGPSLLAACKVVRQQQGECQPGHAVITEAGDLAAKAVIHTVGPIWRGGHDNEPQLLADAYRNSLELVTANGYNSVAFPAISTGIYGYPKAAAAQIAFETVSDYLTRRPQPKQVYFVCYDEENFLLYQRLLGQYDE.

A Macro domain is found at 1–175; it reads MSGRINVVQG…LYQRLLGQYD (175 aa). Residues 11–12, Asn25, 33–35, and 122–126 contribute to the substrate site; these read DI, GVD, and STGIY. Catalysis depends on Asp35, which acts as the Proton acceptor.

Belongs to the MacroD-type family. YmdB subfamily. In terms of assembly, homodimer. Interacts with RNase III.

The enzyme catalyses 3''-O-acetyl-ADP-D-ribose + H2O = ADP-D-ribose + acetate + H(+). The catalysed reaction is 2''-O-acetyl-ADP-D-ribose + H2O = ADP-D-ribose + acetate + H(+). Its function is as follows. Deacetylates O-acetyl-ADP ribose to yield ADP-ribose and free acetate. Down-regulates ribonuclease 3 (RNase III) activity. Acts by interacting directly with the region of the ribonuclease that is required for dimerization/activation. The chain is O-acetyl-ADP-ribose deacetylase from Cronobacter turicensis (strain DSM 18703 / CCUG 55852 / LMG 23827 / z3032).